Here is a 232-residue protein sequence, read N- to C-terminus: MAHGVPFDHNYYIVECKEETNAEAQAGAMAATSTEEAPGAVEVAQAAVASSHDSGGAIGCATVKESESDSESESDSESESDSSDSSDESDDDSSTSDEDTSDPEEAAAPSVAAVAAAAAPPTVPAAAAIQIPGPYRYRPPRRHVRRRRRGPPFHFAQWQVEEMESLFEETQYPDLLTRGELARTLNVPEVKVKVWFTNRRAKQRKIERREMLRNIPPGAEDFIFITDFEEPS.

Positions 45–114 (QAAVASSHDS…EAAAPSVAAV (70 aa)) are disordered. Acidic residues predominate over residues 68-105 (SDSESESDSESESDSSDSSDESDDDSSTSDEDTSDPEE). The segment at residues 148-207 (RRGPPFHFAQWQVEEMESLFEETQYPDLLTRGELARTLNVPEVKVKVWFTNRRAKQRKIE) is a DNA-binding region (homeobox).

The protein belongs to the paired-like homeobox family.

Its subcellular location is the nucleus. Functionally, probable transcription factor. This chain is Homeobox protein Rhox13, found in Mus musculus (Mouse).